Consider the following 187-residue polypeptide: Putative manganese efflux pump MntP (187 aa).

A run of 6 helical transmembrane segments spans residues Trp3 to Ala23, Leu39 to Met59, Ile65 to Val85, Gly103 to Ser123, Ile124 to Val144, and Ile166 to Leu186.

The protein belongs to the MntP (TC 9.B.29) family.

It localises to the cell inner membrane. Probably functions as a manganese efflux pump. The polypeptide is Putative manganese efflux pump MntP (Geobacter sp. (strain M21)).